The sequence spans 132 residues: UPF0332 protein TM_1000 (132 aa).

Belongs to the UPF0332 family.

The sequence is that of UPF0332 protein TM_1000 from Thermotoga maritima (strain ATCC 43589 / DSM 3109 / JCM 10099 / NBRC 100826 / MSB8).